The primary structure comprises 459 residues: Phosphomethylpyrimidine synthase (459 aa).

Substrate-binding positions include asparagine 80, methionine 109, tyrosine 139, histidine 175, serine 195–glycine 197, aspartate 236–arginine 239, and glutamate 275. Histidine 279 provides a ligand contact to Zn(2+). Residue tyrosine 302 coordinates substrate. Residue histidine 343 participates in Zn(2+) binding. [4Fe-4S] cluster contacts are provided by cysteine 423, cysteine 426, and cysteine 431.

The protein belongs to the ThiC family. [4Fe-4S] cluster serves as cofactor.

The enzyme catalyses 5-amino-1-(5-phospho-beta-D-ribosyl)imidazole + S-adenosyl-L-methionine = 4-amino-2-methyl-5-(phosphooxymethyl)pyrimidine + CO + 5'-deoxyadenosine + formate + L-methionine + 3 H(+). Its pathway is cofactor biosynthesis; thiamine diphosphate biosynthesis. Its function is as follows. Catalyzes the synthesis of the hydroxymethylpyrimidine phosphate (HMP-P) moiety of thiamine from aminoimidazole ribotide (AIR) in a radical S-adenosyl-L-methionine (SAM)-dependent reaction. The polypeptide is Phosphomethylpyrimidine synthase (Synechocystis sp. (strain ATCC 27184 / PCC 6803 / Kazusa)).